A 1033-amino-acid chain; its full sequence is Isoleucine--tRNA ligase 2 (1033 aa).

A 'HIGH' region motif is present at residues 47–57 (PTANGLPHVGH). A 'KMSKS' region motif is present at residues 590–594 (KMSKS). Lys593 lines the ATP pocket.

This sequence belongs to the class-I aminoacyl-tRNA synthetase family. IleS type 2 subfamily. Monomer. Requires Zn(2+) as cofactor.

The protein localises to the cytoplasm. It carries out the reaction tRNA(Ile) + L-isoleucine + ATP = L-isoleucyl-tRNA(Ile) + AMP + diphosphate. Its function is as follows. Catalyzes the attachment of isoleucine to tRNA(Ile). As IleRS can inadvertently accommodate and process structurally similar amino acids such as valine, to avoid such errors it has two additional distinct tRNA(Ile)-dependent editing activities. One activity is designated as 'pretransfer' editing and involves the hydrolysis of activated Val-AMP. The other activity is designated 'posttransfer' editing and involves deacylation of mischarged Val-tRNA(Ile). The sequence is that of Isoleucine--tRNA ligase 2 from Bacillus cereus (strain ATCC 14579 / DSM 31 / CCUG 7414 / JCM 2152 / NBRC 15305 / NCIMB 9373 / NCTC 2599 / NRRL B-3711).